Here is a 198-residue protein sequence, read N- to C-terminus: RNA-free ribonuclease P (198 aa).

This sequence belongs to the HARP family.

It catalyses the reaction Endonucleolytic cleavage of RNA, removing 5'-extranucleotides from tRNA precursor.. RNA-free RNase P that catalyzes the removal of the 5'-leader sequence from pre-tRNA to produce the mature 5'-terminus. The chain is RNA-free ribonuclease P from Nitrosococcus oceani (strain ATCC 19707 / BCRC 17464 / JCM 30415 / NCIMB 11848 / C-107).